Consider the following 211-residue polypeptide: LexA repressor (211 aa).

The segment at residues 35–55 (RAEIANFFGFKSANAAEEHLK) is a DNA-binding region (H-T-H motif). Residues Ser128 and Lys165 each act as for autocatalytic cleavage activity in the active site.

It belongs to the peptidase S24 family. In terms of assembly, homodimer.

It carries out the reaction Hydrolysis of Ala-|-Gly bond in repressor LexA.. In terms of biological role, represses a number of genes involved in the response to DNA damage (SOS response), including recA and lexA. In the presence of single-stranded DNA, RecA interacts with LexA causing an autocatalytic cleavage which disrupts the DNA-binding part of LexA, leading to derepression of the SOS regulon and eventually DNA repair. In Colwellia psychrerythraea (strain 34H / ATCC BAA-681) (Vibrio psychroerythus), this protein is LexA repressor.